Here is a 218-residue protein sequence, read N- to C-terminus: Elongation factor Ts (218 aa).

Residues 82-85 (TDFV) form an involved in Mg(2+) ion dislocation from EF-Tu region.

It belongs to the EF-Ts family.

It is found in the cytoplasm. Associates with the EF-Tu.GDP complex and induces the exchange of GDP to GTP. It remains bound to the aminoacyl-tRNA.EF-Tu.GTP complex up to the GTP hydrolysis stage on the ribosome. This chain is Elongation factor Ts, found in Prochlorococcus marinus (strain MIT 9312).